A 78-amino-acid chain; its full sequence is Large ribosomal subunit protein bL28B (78 aa).

It belongs to the bacterial ribosomal protein bL28 family.

The polypeptide is Large ribosomal subunit protein bL28B (rpmB2) (Streptomyces coelicolor (strain ATCC BAA-471 / A3(2) / M145)).